The primary structure comprises 150 residues: Cytochrome c oxidase subunit 5A, mitochondrial (150 aa).

Residues 1–41 (MLGAALRRCAVAATTWAGPRGHLHSARTPGPAAAIQSVRCY) constitute a mitochondrion transit peptide. The SIFI-degron motif lies at 2-17 (LGAALRRCAVAATTWA). Residues lysine 87 and lysine 113 each carry the N6-acetyllysine modification. The residue at position 141 (threonine 141) is a Phosphothreonine.

This sequence belongs to the cytochrome c oxidase subunit 5A family. As to quaternary structure, component of the cytochrome c oxidase (complex IV, CIV), a multisubunit enzyme composed of 14 subunits. The complex is composed of a catalytic core of 3 subunits MT-CO1, MT-CO2 and MT-CO3, encoded in the mitochondrial DNA, and 11 supernumerary subunits COX4I, COX5A, COX5B, COX6A, COX6B, COX6C, COX7A, COX7B, COX7C, COX8 and NDUFA4, which are encoded in the nuclear genome. The complex exists as a monomer or a dimer and forms supercomplexes (SCs) in the inner mitochondrial membrane with NADH-ubiquinone oxidoreductase (complex I, CI) and ubiquinol-cytochrome c oxidoreductase (cytochrome b-c1 complex, complex III, CIII), resulting in different assemblies (supercomplex SCI(1)III(2)IV(1) and megacomplex MCI(2)III(2)IV(2)). Interacts with AFG1L. Interacts with RAB5IF. In response to mitochondrial stress, the precursor protein is ubiquitinated by the SIFI complex in the cytoplasm before mitochondrial import, leading to its degradation. Within the SIFI complex, UBR4 initiates ubiquitin chain that are further elongated or branched by KCMF1.

The protein localises to the mitochondrion inner membrane. Its pathway is energy metabolism; oxidative phosphorylation. Its function is as follows. Component of the cytochrome c oxidase, the last enzyme in the mitochondrial electron transport chain which drives oxidative phosphorylation. The respiratory chain contains 3 multisubunit complexes succinate dehydrogenase (complex II, CII), ubiquinol-cytochrome c oxidoreductase (cytochrome b-c1 complex, complex III, CIII) and cytochrome c oxidase (complex IV, CIV), that cooperate to transfer electrons derived from NADH and succinate to molecular oxygen, creating an electrochemical gradient over the inner membrane that drives transmembrane transport and the ATP synthase. Cytochrome c oxidase is the component of the respiratory chain that catalyzes the reduction of oxygen to water. Electrons originating from reduced cytochrome c in the intermembrane space (IMS) are transferred via the dinuclear copper A center (CU(A)) of subunit 2 and heme A of subunit 1 to the active site in subunit 1, a binuclear center (BNC) formed by heme A3 and copper B (CU(B)). The BNC reduces molecular oxygen to 2 water molecules using 4 electrons from cytochrome c in the IMS and 4 protons from the mitochondrial matrix. The sequence is that of Cytochrome c oxidase subunit 5A, mitochondrial (COX5A) from Symphalangus syndactylus (Siamang).